The sequence spans 434 residues: Serine hydroxymethyltransferase (434 aa).

(6S)-5,6,7,8-tetrahydrofolate contacts are provided by residues Leu-131 and 135–137 (GHL). Lys-240 carries the post-translational modification N6-(pyridoxal phosphate)lysine.

The protein belongs to the SHMT family. In terms of assembly, homodimer. The cofactor is pyridoxal 5'-phosphate.

Its subcellular location is the cytoplasm. The catalysed reaction is (6R)-5,10-methylene-5,6,7,8-tetrahydrofolate + glycine + H2O = (6S)-5,6,7,8-tetrahydrofolate + L-serine. The protein operates within one-carbon metabolism; tetrahydrofolate interconversion. It participates in amino-acid biosynthesis; glycine biosynthesis; glycine from L-serine: step 1/1. Functionally, catalyzes the reversible interconversion of serine and glycine with tetrahydrofolate (THF) serving as the one-carbon carrier. This reaction serves as the major source of one-carbon groups required for the biosynthesis of purines, thymidylate, methionine, and other important biomolecules. Also exhibits THF-independent aldolase activity toward beta-hydroxyamino acids, producing glycine and aldehydes, via a retro-aldol mechanism. The protein is Serine hydroxymethyltransferase of Gluconobacter oxydans (strain 621H) (Gluconobacter suboxydans).